Consider the following 573-residue polypeptide: MVVGLSPRRLGTLRRMAVDRRTKSPRRTPARQRTNRTLGRALVRWATTTDHKVIGHLYLATSFGFFLLGGVLAMLMRSELARPGLQLFSNEQYNQLFTVHGTIMMLLFATPLFAGFTNVIMPLQIGAPDLAFPRLNALSYWMYLFGGLMVVSGFLTPGGAASFGWFAYAPLNSATFSPGPGGDLWTMGLVVSGVSTTLSAVNFISTIICLRAPGMTMFRMPIFTWNILFTSILVLPAFPVLTAALLMLEADRKFGAHVFDAANGGALLWQHLFWFFGHPEVYIVALPFFGIVTEIIPVFSRKPIFGYVSLVGATIAITFLSAVVWAHHMFATGAVLLPFFSLMSFLIAVPTGVKFFNWIGTMIRGSLSFETPMLWACGFLVTFLLGGMSGVLIASPPLDFHLTDSYFIVAHLHYVLFGTVVFAMFAGFYFWWPKFTGKLLDERLGKIHFWTLFVGFQTTFLVQHWLGEQGMPRRYADYLAADGFTTLNTISSIGAFLLGLSTLPFLYNVWRTHQYGEKVGRDDPWGYGRSLEWATSSPPPRHNFTSLPRIRSESPAFDLHHPDVTRHDQRHVQ.

A helical membrane pass occupies residues 53 to 73 (VIGHLYLATSFGFFLLGGVLA). Residue His-100 coordinates Fe(II)-heme a. Helical transmembrane passes span 103-123 (IMML…IMPL), 141-161 (WMYL…GGAA), 188-208 (GLVV…STII), 227-247 (ILFT…ALLM), 272-292 (LFWF…FGIV), and 304-324 (IFGY…SAVV). Residues His-278 and Tyr-282 each contribute to the Cu cation site. The segment at residues 278-282 (HPEVY) is a cross-link (1'-histidyl-3'-tyrosine (His-Tyr)). 2 residues coordinate Cu cation: His-327 and His-328. 2 helical membrane passes run 329–349 (MFAT…LIAV) and 373–393 (MLWA…GVLI). Heme a3 is bound at residue His-411. The next 3 membrane-spanning stretches (helical) occupy residues 412–432 (LHYV…YFWW), 447–467 (IHFW…HWLG), and 490–510 (ISSI…YNVW). His-413 lines the Fe(II)-heme a pocket.

The protein belongs to the heme-copper respiratory oxidase family. Associates with subunits II, III and IV to form cytochrome c oxidase. Requires Cu(2+) as cofactor. It depends on heme as a cofactor.

The protein localises to the cell membrane. It catalyses the reaction 4 Fe(II)-[cytochrome c] + O2 + 8 H(+)(in) = 4 Fe(III)-[cytochrome c] + 2 H2O + 4 H(+)(out). It participates in energy metabolism; oxidative phosphorylation. Its function is as follows. Cytochrome c oxidase is the component of the respiratory chain that catalyzes the reduction of oxygen to water. Subunits 1-3 form the functional core of the enzyme complex. CO I is the catalytic subunit of the enzyme. Electrons originating in cytochrome c are transferred via the copper A center of subunit 2 and heme A of subunit 1 to the bimetallic center formed by heme A3 and copper B. The chain is Putative cytochrome c oxidase subunit 1-beta (ctaD2) from Streptomyces coelicolor (strain ATCC BAA-471 / A3(2) / M145).